We begin with the raw amino-acid sequence, 207 residues long: Large ribosomal subunit protein uL4 (207 aa).

Positions 53 to 85 (ERSDVARTGKKFGRQKGGGTARHGDRKAPIFIG) are disordered.

It belongs to the universal ribosomal protein uL4 family. Part of the 50S ribosomal subunit.

Functionally, one of the primary rRNA binding proteins, this protein initially binds near the 5'-end of the 23S rRNA. It is important during the early stages of 50S assembly. It makes multiple contacts with different domains of the 23S rRNA in the assembled 50S subunit and ribosome. Forms part of the polypeptide exit tunnel. The chain is Large ribosomal subunit protein uL4 from Novosphingobium aromaticivorans (strain ATCC 700278 / DSM 12444 / CCUG 56034 / CIP 105152 / NBRC 16084 / F199).